The sequence spans 214 residues: UPF0758 protein (214 aa).

Positions 92 to 214 constitute an MPN domain; it reads VLSSWQALLD…ELSFRAEGLL (123 aa). Residues His-163, His-165, and Asp-176 each contribute to the Zn(2+) site. The short motif at 163–176 is the JAMM motif element; sequence HNHPSGDPTPSQAD.

The protein belongs to the UPF0758 family.

This is UPF0758 protein from Rhodobacter capsulatus (Rhodopseudomonas capsulata).